The following is a 165-amino-acid chain: uncharacterized protein (165 aa).

Residues 15 to 35 (MSPAIILIGVLILIVLFVIKF) traverse the membrane as a helical segment. Positions 67 to 119 (ISQLNTLRATLAAKKKELKTLRTARKKECTEQLAKTQAEVDRIQAKIDNFSSR) form a coiled coil. Residues 123–156 (VPLPGGEVGPPYNPPPPRTNTRPNPRPNPRPAQL) are disordered. Residues 133 to 154 (PYNPPPPRTNTRPNPRPNPRPA) are compositionally biased toward pro residues.

Its subcellular location is the membrane. This is an uncharacterized protein from Acheta domesticus (House cricket).